Reading from the N-terminus, the 352-residue chain is Glucose-6-phosphatase catalytic subunit 1 (352 aa).

Residues 1–27 are Lumenal-facing; it reads MDLLHSWGVELAVYLQTRYGKYEGLFD. Residues 28–48 form a helical membrane-spanning segment; it reads LASTVADLHTTFFWLFPIWFH. The Cytoplasmic portion of the chain corresponds to 49 to 56; it reads LRRDTALR. Residues 57 to 77 traverse the membrane as a helical segment; sequence LIWVAVIGDWLNLVLKWVLFG. The Lumenal portion of the chain corresponds to 78 to 113; sequence ERPYWWVHETKFYGAGPAPSLQQFPITCETGPGSPS. Residue Arg-79 participates in substrate binding. Residues 114-134 traverse the membrane as a helical segment; the sequence is GHAMGAAGVWYVMVTALLSIA. The active-site Proton donor is the His-115. At 135 to 141 the chain is on the cytoplasmic side; that stretch reads REKQCPP. A helical membrane pass occupies residues 142–162; it reads LLYRFLYIGLWMLMGLVELVV. Residues 163 to 166 are Lumenal-facing; sequence CISR. Residue Arg-166 coordinates substrate. A helical membrane pass occupies residues 167–187; sequence VYMAAHFPHQVIAGIITGTLV. Catalysis depends on His-172, which acts as the Nucleophile. The Cytoplasmic portion of the chain corresponds to 188-205; sequence AEVVSKEKWIYSASLKKY. The helical transmembrane segment at 206–226 threads the bilayer; sequence FLITLFLTSFAVGFYVLLKAL. At 227 to 256 the chain is on the lumenal side; that stretch reads DVDLLWTMEKAQKWCIRPEWVHLDSAPFAS. A helical membrane pass occupies residues 257–276; sequence LLRNMGSLFGLGLGLHSPFY. Residues 277–289 are Cytoplasmic-facing; it reads KTTKMRIMSAPLR. The chain crosses the membrane as a helical span at residues 290–310; the sequence is IGCIVISVSLLHLLDGWTFSP. Residues 311–324 are Lumenal-facing; the sequence is ENHMTFYALSFGKS. The chain crosses the membrane as a helical span at residues 325-345; that stretch reads AVALLIPTTLVPWALSKIYPV. Topologically, residues 346 to 352 are cytoplasmic; the sequence is KTEGKNL. The Prevents secretion from ER signature appears at 349–352; sequence GKNL.

It belongs to the glucose-6-phosphatase family.

Its subcellular location is the endoplasmic reticulum membrane. The enzyme catalyses D-glucose 6-phosphate + H2O = D-glucose + phosphate. Its pathway is carbohydrate biosynthesis; gluconeogenesis. Hydrolyzes glucose-6-phosphate to glucose in the endoplasmic reticulum. Forms with the glucose-6-phosphate transporter (SLC37A4/G6PT) the complex responsible for glucose production in the terminal step of glycogenolysis and gluconeogenesis. Hence, it is the key enzyme in homeostatic regulation of blood glucose levels. This is Glucose-6-phosphatase catalytic subunit 1 (g6pc1) from Haplochromis nubilus (Blue Victoria mouthbrooder).